The chain runs to 130 residues: Small ribosomal subunit protein uS9 (130 aa).

It belongs to the universal ribosomal protein uS9 family.

This Bacillus cytotoxicus (strain DSM 22905 / CIP 110041 / 391-98 / NVH 391-98) protein is Small ribosomal subunit protein uS9.